Here is a 245-residue protein sequence, read N- to C-terminus: Small ribosomal subunit protein uS3 (245 aa).

One can recognise a KH type-2 domain in the interval 39–108 (IRNYIKKNYY…SVFVNVQEVK (70 aa)).

This sequence belongs to the universal ribosomal protein uS3 family. In terms of assembly, part of the 30S ribosomal subunit. Forms a tight complex with proteins S10 and S14.

In terms of biological role, binds the lower part of the 30S subunit head. Binds mRNA in the 70S ribosome, positioning it for translation. The polypeptide is Small ribosomal subunit protein uS3 (Dictyoglomus turgidum (strain DSM 6724 / Z-1310)).